We begin with the raw amino-acid sequence, 1958 residues long: Echinoderm microtubule-associated protein-like 6 (1958 aa).

10 WD repeats span residues 59-100, 104-145, 148-187, 195-233, 235-273, 280-321, 323-362, 364-403, 406-445, and 561-601; these read GHND…TVSI, VHTH…LLAS, GHSDRIFDISWDPYQPNRMVSCGVKHIKFWTLCGNALTAK, GDLQTILCLACAKEDITYSGALNGDIYVWKGLTLVRTIQ, AHSAGIFSLYACEEGFATGGRDGCIRLWDTDFKPITKID, GYKG…LILQ, HCEGELWALALHPKKPLAVTGSDDRSVRLWSLADHALIAR, NMEEAVRSVSFSPDGSQLALGMKDGSFIVLRVRDMTEVVH, DRKEVIHEMKFSPDGSYLAVGSNDGPVDVYAVAQRYKKIG, and GHSA…VSNG. The interval 604-627 is disordered; sequence ETTPQEGGADSYSEESDSDFSDVP. Residues 615-627 are compositionally biased toward acidic residues; that stretch reads YSEESDSDFSDVP. WD repeat units follow at residues 725-766, 770-811, 814-853, 861-900, 901-940, 996-1035, 1038-1077, 1080-1120, 1191-1230, and 1236-1276; these read GHDD…CLSL, HHQR…KIAT, GHKDKIFVVKCNPQHADKLVTVGIKHIKFWQQAGGGFTSK, GKLETMMCVSYGRMEDLVFSGAATGDIFIWKDVLLLKTVK, AHDGPVFAMYALDKGFVTGGKDGIVELWDDMFERCLKTYA, HMEGEVWGLAAHPLLPICATVSDDKTLRIWELSSQHRMLA, KLKKGGRCCAFSPDGKALAVGLNDGSFLVVNADTVEDMLS, HRKE…RVGI, SDVTDVNAANLTKDGSLLATGDDFGFVKLFSYPVKGQHAR, and GHSA…TQES. Residues 1322–1337 show a composition bias toward basic and acidic residues; the sequence is KPHQQLKEVSMEERPP. Residues 1322-1352 are disordered; it reads KPHQQLKEVSMEERPPVSRAAPQPEKLQKNN. WD repeat units lie at residues 1412 to 1456, 1460 to 1501, 1504 to 1543, 1553 to 1591, 1593 to 1638, 1685 to 1724, 1726 to 1767, 1768 to 1807, 1880 to 1919, and 1925 to 1958; these read EHTD…TLSM, FHTK…KVAS, GHLERIFVVEFRPDSDTQFVSVGVKHMKFWTLAGSALLYK, AKMQTMLSVAFGANNLTFTGAINGDVYVWKEHFLIRLVA, AHTG…CRAF, HMEGEIWGLATHPSKDMFISASNDGTARIWDLADKKLLNK, NLGH…GKKR, DRKSAIQDIRISPDNRFLAVGSSEQTVDFYDLTQGTSLNR, ADKADVNCACVTHAGLNIVTGDDFGLLKLFDFPCTEKFAK, and GHSAHVTNIRFSSDDKYVVSTGGDDCSVFVWRCL.

The protein belongs to the WD repeat EMAP family.

Its subcellular location is the cytoplasm. It is found in the cytoskeleton. In terms of biological role, may modify the assembly dynamics of microtubules, such that microtubules are slightly longer, but more dynamic. This chain is Echinoderm microtubule-associated protein-like 6 (Eml6), found in Mus musculus (Mouse).